The chain runs to 402 residues: MSMEEISSCESFLTSSKPYFAMISLQFGYAGMNIITKISLNTGMSHYVLVVYRHAIATAVIAPFAFFFERKAQPKITFSIFMQLFILGLLGPVIDQNFYYMGLKYTSPTFSCAMSNMLPAMTFILAVLFRMEMLDLKKLWCQAKIAGTVVTVAGAMLMTIYKGPIVELFWTKYMHIQDSSHANTTSSKNSSSDKEFLKGSILLIFATLAWASLFVLQAKILKTYAKHQLSLTTLICFIGTLQAVAVTFVMEHNPSAWRIGWDMNLLAAAYSGIVASSISYYVQGIVMKKRGPVFATAFSPLMMVIVAVMGSFVLAEKIFLGGVIGAVLIVIGLYAVLWGKQKENQVTICELAKIDSNSKVTEDVEANGSKMKISEGDNSMLSTIVISVPLSETHLKKTIQEP.

10 consecutive transmembrane segments (helical) span residues 20-40 (FAMISLQFGYAGMNIITKISL), 48-68 (VLVVYRHAIATAVIAPFAFFF), 74-94 (PKITFSIFMQLFILGLLGPVI), 109-129 (TFSCAMSNMLPAMTFILAVLF), 149-169 (VVTVAGAMLMTIYKGPIVELF), 196-216 (FLKGSILLIFATLAWASLFVL), 229-249 (LSLTTLICFIGTLQAVAVTFV), 266-286 (LAAAYSGIVASSISYYVQGIV), 293-313 (VFATAFSPLMMVIVAVMGSFV), and 318-338 (IFLGGVIGAVLIVIGLYAVLW). EamA domains follow at residues 29-159 (YAGM…MLMT) and 208-337 (LAWA…YAVL).

It belongs to the drug/metabolite transporter (DMT) superfamily. Plant drug/metabolite exporter (P-DME) (TC 2.A.7.4) family.

The protein localises to the membrane. The sequence is that of WAT1-related protein At5g07050 from Arabidopsis thaliana (Mouse-ear cress).